The following is a 334-amino-acid chain: Fructose-1,6-bisphosphatase class 1 (334 aa).

Mg(2+)-binding residues include Glu89, Asp112, Leu114, and Asp115. Substrate is bound by residues Asp115–Ser118, Asn208, Tyr241, Tyr259–Tyr261, and Lys271. Glu277 is a binding site for Mg(2+).

This sequence belongs to the FBPase class 1 family. In terms of assembly, homotetramer. The cofactor is Mg(2+).

The protein resides in the cytoplasm. It carries out the reaction beta-D-fructose 1,6-bisphosphate + H2O = beta-D-fructose 6-phosphate + phosphate. It participates in carbohydrate biosynthesis; gluconeogenesis. The polypeptide is Fructose-1,6-bisphosphatase class 1 (Pectobacterium atrosepticum (strain SCRI 1043 / ATCC BAA-672) (Erwinia carotovora subsp. atroseptica)).